Reading from the N-terminus, the 407-residue chain is MKRTFIMVLDSFGIGASADAKKFGDEGADTLGHIAEACARGEANVGRSGPLTLPNLSRLGLGKAAEESTGTFPVGLDKNADIIGAYGYASELSSGKDTPSGHWEIAGVPVLFDWGYFSDVENSFPQELLDKLVKRANLSGYLGNCHSSGTVILDQLGEEHMKTGKPIFYTSADSVFQIACHEETFGLDRLYELCEIAREELTDGGYNIGRVIARPFIGDKPGHFQRTGNRHDLAVEPPAPTMLKKLVDEKGGEVVSIGKIADIYAQVGITQKVKATGLDALFDATIEEMKKAGDNTIVFTNFVDFDSSYGHRRDVAGYAAALELFDRRLPELMALIKEDDILILTADHGCDPTWPGTDHTREHIPVLVYGPKVKPGSLGHRETFADIGQTVAAYFGLSPMDYGKNML.

The Mn(2+) site is built by aspartate 10, aspartate 306, histidine 311, aspartate 347, histidine 348, and histidine 359.

This sequence belongs to the phosphopentomutase family. Requires Mn(2+) as cofactor.

It is found in the cytoplasm. It carries out the reaction 2-deoxy-alpha-D-ribose 1-phosphate = 2-deoxy-D-ribose 5-phosphate. The enzyme catalyses alpha-D-ribose 1-phosphate = D-ribose 5-phosphate. It functions in the pathway carbohydrate degradation; 2-deoxy-D-ribose 1-phosphate degradation; D-glyceraldehyde 3-phosphate and acetaldehyde from 2-deoxy-alpha-D-ribose 1-phosphate: step 1/2. In terms of biological role, isomerase that catalyzes the conversion of deoxy-ribose 1-phosphate (dRib-1-P) and ribose 1-phosphate (Rib-1-P) to deoxy-ribose 5-phosphate (dRib-5-P) and ribose 5-phosphate (Rib-5-P), respectively. This chain is Phosphopentomutase, found in Yersinia pestis bv. Antiqua (strain Angola).